The following is a 248-amino-acid chain: UPF0736 protein BC_1176 (248 aa).

It belongs to the UPF0736 family.

The sequence is that of UPF0736 protein BC_1176 from Bacillus cereus (strain ATCC 14579 / DSM 31 / CCUG 7414 / JCM 2152 / NBRC 15305 / NCIMB 9373 / NCTC 2599 / NRRL B-3711).